Consider the following 352-residue polypeptide: MEKLRVGLVFGGCSGEHEVSITSAKAVCGALQTAPNPDKYEVIPFYIHKNGCWQAGEVANQVLEMGKPQDQAEEGSRWHFPEAAASIDVWFPILHGPNGEDGTIQGLLQLMQVPYVGSGVLGSAAGMDKIAMKTVFAAAGLPQVKYESVTREQVWSDPCVFKQVCDRIDETIGYPNFVKPANLGSSVGISKVRSRLELEAALDSAASFDRRIVVEAGVVAREVECAVLGNGRPRASVVGEISFDSDFYDYETKYTEGRASLQIPAPLPADITEKIQEMAINAFIAVDAAGLSRVDFFYVESTGEVLINEINTLPGFTSTSMYPMLWSVSGVDFPKLVDRLIQLAVEYHAPAD.

The 210-residue stretch at lysine 133 to glutamine 342 folds into the ATP-grasp domain. Position 169-224 (aspartate 169–glutamate 224) interacts with ATP. The Mg(2+) site is built by aspartate 295, glutamate 309, and asparagine 311.

It belongs to the D-alanine--D-alanine ligase family. Requires Mg(2+) as cofactor. It depends on Mn(2+) as a cofactor.

Its subcellular location is the cytoplasm. The catalysed reaction is 2 D-alanine + ATP = D-alanyl-D-alanine + ADP + phosphate + H(+). Its pathway is cell wall biogenesis; peptidoglycan biosynthesis. In terms of biological role, cell wall formation. This Acaryochloris marina (strain MBIC 11017) protein is D-alanine--D-alanine ligase.